A 332-amino-acid chain; its full sequence is MVLKLFLSKRPIFLHPHCVSSSCRNSDTTIRLSRRIATMSENKSPLLERARNIVPHLETHRHKGQAGRIGIVGGSLEYTGAPYFAAISALKVGADLVHVFCLQAAAQVIKSYSPELIVHPLLDSNDATMQIEPWLERLHVLVIGPGLGRDRLILQTVSELIKICRQLQKPLVIDADGLFLITHDISLVKDYYGVILTPNAIEFCRLFGNDRDRIMQTLEKLGRGVTVIEKGLNDRIYDSLTLEKYECPQGGSGRRCGGQGDLLAGALATFYFWALECKQEISPAVVACFAASYLTKNCNTYAFKAKGRSMTCTDMIEQIHNVFDDIFEHKKE.

Residues 46–326 (LLERARNIVP…EQIHNVFDDI (281 aa)) enclose the YjeF C-terminal domain. Residues glycine 146 and 199 to 205 (NAIEFCR) contribute to the (6S)-NADPHX site. Residues 230–234 (KGLND) and 251–260 (GSGRRCGGQG) contribute to the ATP site. A (6S)-NADPHX-binding site is contributed by aspartate 261.

The protein belongs to the NnrD/CARKD family. Requires Mg(2+) as cofactor.

It catalyses the reaction (6S)-NADHX + ATP = ADP + phosphate + NADH + H(+). It carries out the reaction (6S)-NADPHX + ATP = ADP + phosphate + NADPH + H(+). Catalyzes the dehydration of the S-form of NAD(P)HX at the expense of ATP, which is converted to ADP. Together with NAD(P)HX epimerase, which catalyzes the epimerization of the S- and R-forms, the enzyme allows the repair of both epimers of NAD(P)HX, a damaged form of NAD(P)H that is a result of enzymatic or heat-dependent hydration. The protein is ATP-dependent (S)-NAD(P)H-hydrate dehydratase of Aedes aegypti (Yellowfever mosquito).